Consider the following 265-residue polypeptide: Ribosomal RNA small subunit methyltransferase A (265 aa).

S-adenosyl-L-methionine is bound by residues H13, L15, G40, E61, D85, and N103.

The protein belongs to the class I-like SAM-binding methyltransferase superfamily. rRNA adenine N(6)-methyltransferase family. RsmA subfamily.

It localises to the cytoplasm. It carries out the reaction adenosine(1518)/adenosine(1519) in 16S rRNA + 4 S-adenosyl-L-methionine = N(6)-dimethyladenosine(1518)/N(6)-dimethyladenosine(1519) in 16S rRNA + 4 S-adenosyl-L-homocysteine + 4 H(+). Its function is as follows. Specifically dimethylates two adjacent adenosines (A1518 and A1519) in the loop of a conserved hairpin near the 3'-end of 16S rRNA in the 30S particle. May play a critical role in biogenesis of 30S subunits. The protein is Ribosomal RNA small subunit methyltransferase A of Bordetella bronchiseptica (strain ATCC BAA-588 / NCTC 13252 / RB50) (Alcaligenes bronchisepticus).